The chain runs to 929 residues: Isoleucine--tRNA ligase (929 aa).

A 'HIGH' region motif is present at residues 58 to 68; the sequence is PYANGDIHIGH. E563 is an L-isoleucyl-5'-AMP binding site. The short motif at 605 to 609 is the 'KMSKS' region element; it reads KMSKS. K608 provides a ligand contact to ATP. Zn(2+) contacts are provided by C892, C895, C912, and C915.

This sequence belongs to the class-I aminoacyl-tRNA synthetase family. IleS type 1 subfamily. As to quaternary structure, monomer. The cofactor is Zn(2+).

It localises to the cytoplasm. The enzyme catalyses tRNA(Ile) + L-isoleucine + ATP = L-isoleucyl-tRNA(Ile) + AMP + diphosphate. Catalyzes the attachment of isoleucine to tRNA(Ile). As IleRS can inadvertently accommodate and process structurally similar amino acids such as valine, to avoid such errors it has two additional distinct tRNA(Ile)-dependent editing activities. One activity is designated as 'pretransfer' editing and involves the hydrolysis of activated Val-AMP. The other activity is designated 'posttransfer' editing and involves deacylation of mischarged Val-tRNA(Ile). The chain is Isoleucine--tRNA ligase from Neisseria meningitidis serogroup C / serotype 2a (strain ATCC 700532 / DSM 15464 / FAM18).